Here is a 327-residue protein sequence, read N- to C-terminus: MERYECLGKIGEGAAGVVHVARDRTTGETVAVKRLHGGIGCGEEEWLREARCLQACRGHPHLVELRAAHREMRRGGGGACCYVVMEYVDGPSLSRVVREERRGRPFPEAEARRLMRQLLDGVAAMHAAGVMHRDLKPDNVVVGPRGDLKICDFGMSRVTAAGAPPYTSPVVTLWYRAPELILGSQEYDSLVDTWSLGCIMAELLAGAPLFPGRSEMDQLNRVFDTVGMQDMKSWPGFARLPRAESALCSRARPPSRLREMFPKLSAAGFDVLSGLLACRPDRRLTAADALRCAWFTEADTPPDATPVTCGSARFTPCVSGVADAIVV.

The 292-residue stretch at 4 to 295 folds into the Protein kinase domain; it reads YECLGKIGEG…AADALRCAWF (292 aa). ATP contacts are provided by residues 10–18 and K33; that span reads IGEGAAGVV. D134 functions as the Proton acceptor in the catalytic mechanism. A Phosphothreonine modification is found at T167.

It belongs to the protein kinase superfamily. CMGC Ser/Thr protein kinase family. CDC2/CDKX subfamily.

It catalyses the reaction L-seryl-[protein] + ATP = O-phospho-L-seryl-[protein] + ADP + H(+). The enzyme catalyses L-threonyl-[protein] + ATP = O-phospho-L-threonyl-[protein] + ADP + H(+). It carries out the reaction [DNA-directed RNA polymerase] + ATP = phospho-[DNA-directed RNA polymerase] + ADP + H(+). The polypeptide is Putative cyclin-dependent kinase F-2 (CDKF-2) (Oryza sativa subsp. japonica (Rice)).